Reading from the N-terminus, the 264-residue chain is Short chain dehydrogenase/reductase AacuN (264 aa).

NADP(+) is bound by residues Ile-24, Asp-70, Asn-97, and Arg-130. Active-site proton donor residues include Ser-146, Ser-147, and Tyr-161. The NADP(+) site is built by Tyr-161, Lys-165, and Thr-196. Lys-165 acts as the Lowers pKa of active site Tyr in catalysis.

This sequence belongs to the short-chain dehydrogenases/reductases (SDR) family.

It carries out the reaction 3,8,9,10-tetrahydroxy-6-methyl-1,4-dihydroanthracen-1-one + NADPH + H(+) = (3R)-3,8,9,10-tetrahydroxy-6-methyl-1,2,3,4-tetrahydroanthracen-1-one + NADP(+). The protein operates within secondary metabolite biosynthesis. Atrochrysone carboxylic acid synthase; part of the gene cluster that mediates the biosynthesis of the tetrahydroxanthone dimer secalonic acid D. The pathway begins with the synthesis of atrochrysone thioester by the polyketide synthase AacuL. The atrochrysone carboxyl ACP thioesterase AacuM then breaks the thioester bond and releases the atrochrysone carboxylic acid from AacuL. Atrochrysone carboxylic acid is decarboxylated by the decarboxylase AacuI, and oxidized by the anthrone oxygenase AacuG to yield emodin. Emodin is then reduced to emodin hydroquinone by a yet unidentified oxidoreductase. A-ring reduction by the short chain dehydrogenase AacuN, dehydration by the scytalone dehydratase-like protein AacuK and probable spontaneous re-oxidation, results in overall deoxygenation to chrysophanol. Baeyer-Villiger oxidation by the Baeyer-Villiger monooxygenase (BVMO) AacuH then yields monodictyphenone. Monodictyphenone is transformed into compounds with the tetrahydroxanthone skeleton via methylesterification by the methyltransferase AacuQ, followed by the action of the flavin-dependent monooxygenase AacuC, the isomerase AacuP, and the short chain dehydrogenase/reductase AacuF or AacuD. AacuF and AacuD should accept the same compound as a substrate but perform the ketoreduction with a different stereoselectivity, thus yielding blennolides B and A, respectively. In the final step of the biosynthesis, the cytochrome P450 monooxygenase AacuE accepts blennolide B and/or blennolide A to conduct the dimerization reaction to furnish the tetrahydroxanthone dimers, secalonic acids D, B, and F. The sequence is that of Short chain dehydrogenase/reductase AacuN from Aspergillus aculeatus (strain ATCC 16872 / CBS 172.66 / WB 5094).